The primary structure comprises 241 residues: Methylthioribulose-1-phosphate dehydratase (241 aa).

Residue Cys100 participates in substrate binding. Positions 117 and 119 each coordinate Zn(2+). Glu146 functions as the Proton donor/acceptor in the catalytic mechanism. His202 contacts Zn(2+).

Belongs to the aldolase class II family. MtnB subfamily. The cofactor is Zn(2+).

The protein localises to the cytoplasm. The enzyme catalyses 5-(methylsulfanyl)-D-ribulose 1-phosphate = 5-methylsulfanyl-2,3-dioxopentyl phosphate + H2O. Its pathway is amino-acid biosynthesis; L-methionine biosynthesis via salvage pathway; L-methionine from S-methyl-5-thio-alpha-D-ribose 1-phosphate: step 2/6. Catalyzes the dehydration of methylthioribulose-1-phosphate (MTRu-1-P) into 2,3-diketo-5-methylthiopentyl-1-phosphate (DK-MTP-1-P). In Ajellomyces dermatitidis (strain ER-3 / ATCC MYA-2586) (Blastomyces dermatitidis), this protein is Methylthioribulose-1-phosphate dehydratase.